A 650-amino-acid polypeptide reads, in one-letter code: 1-deoxy-D-xylulose-5-phosphate synthase (650 aa).

The segment covering 1-13 has biased composition (basic and acidic residues); it reads MSKIKNDKRETGH. Residues 1–23 are disordered; it reads MSKIKNDKRETGHLKSPPETPLL. Residues histidine 92 and 133–135 contribute to the thiamine diphosphate site; that span reads AHS. Position 164 (aspartate 164) interacts with Mg(2+). Residues 165 to 166, asparagine 193, tyrosine 302, and glutamate 384 contribute to the thiamine diphosphate site; that span reads GA. A Mg(2+)-binding site is contributed by asparagine 193.

Belongs to the transketolase family. DXPS subfamily. In terms of assembly, homodimer. Requires Mg(2+) as cofactor. Thiamine diphosphate serves as cofactor.

The catalysed reaction is D-glyceraldehyde 3-phosphate + pyruvate + H(+) = 1-deoxy-D-xylulose 5-phosphate + CO2. It participates in metabolic intermediate biosynthesis; 1-deoxy-D-xylulose 5-phosphate biosynthesis; 1-deoxy-D-xylulose 5-phosphate from D-glyceraldehyde 3-phosphate and pyruvate: step 1/1. Its function is as follows. Catalyzes the acyloin condensation reaction between C atoms 2 and 3 of pyruvate and glyceraldehyde 3-phosphate to yield 1-deoxy-D-xylulose-5-phosphate (DXP). In Chelativorans sp. (strain BNC1), this protein is 1-deoxy-D-xylulose-5-phosphate synthase.